Here is a 901-residue protein sequence, read N- to C-terminus: Putative serine/threonine-protein kinase YPL150W (901 aa).

The Protein kinase domain occupies 41–287 (YKILKQIGEG…LSQVLRHPFL (247 aa)). Residues 47-55 (IGEGSFGKV) and Lys-70 each bind ATP. Asp-157 acts as the Proton acceptor in catalysis. Ser-456 carries the post-translational modification Phosphoserine. The disordered stretch occupies residues 500–530 (APSSGSFLKKNSGSIQKSRTDTVANPSRTES). Ser-533 is subject to Phosphoserine. The span at 588-599 (SSISSEISQTST) shows a compositional bias: low complexity. Disordered stretches follow at residues 588–629 (SSIS…NRPL) and 745–770 (TQRPWTGKRTYTTSRHGKNARRSSKR). The segment covering 600–613 (GNYDSESAENSRSI) has biased composition (polar residues). Over residues 759–770 (RHGKNARRSSKR) the composition is skewed to basic residues.

It belongs to the protein kinase superfamily. Ser/Thr protein kinase family.

The catalysed reaction is L-seryl-[protein] + ATP = O-phospho-L-seryl-[protein] + ADP + H(+). It carries out the reaction L-threonyl-[protein] + ATP = O-phospho-L-threonyl-[protein] + ADP + H(+). In terms of biological role, putative serine/threonine-protein kinase. The protein is Putative serine/threonine-protein kinase YPL150W of Saccharomyces cerevisiae (strain ATCC 204508 / S288c) (Baker's yeast).